Consider the following 100-residue polypeptide: Small ribosomal subunit protein uS14c (100 aa).

Belongs to the universal ribosomal protein uS14 family. Part of the 30S ribosomal subunit.

It localises to the plastid. Its subcellular location is the chloroplast. Binds 16S rRNA, required for the assembly of 30S particles. This is Small ribosomal subunit protein uS14c from Oltmannsiellopsis viridis (Marine flagellate).